The chain runs to 223 residues: Deoxyribose-phosphate aldolase (223 aa).

Catalysis depends on Asp91, which acts as the Proton donor/acceptor. The Schiff-base intermediate with acetaldehyde role is filled by Lys153. Lys182 acts as the Proton donor/acceptor in catalysis.

This sequence belongs to the DeoC/FbaB aldolase family. DeoC type 1 subfamily.

It is found in the cytoplasm. The enzyme catalyses 2-deoxy-D-ribose 5-phosphate = D-glyceraldehyde 3-phosphate + acetaldehyde. The protein operates within carbohydrate degradation; 2-deoxy-D-ribose 1-phosphate degradation; D-glyceraldehyde 3-phosphate and acetaldehyde from 2-deoxy-alpha-D-ribose 1-phosphate: step 2/2. In terms of biological role, catalyzes a reversible aldol reaction between acetaldehyde and D-glyceraldehyde 3-phosphate to generate 2-deoxy-D-ribose 5-phosphate. The sequence is that of Deoxyribose-phosphate aldolase from Streptococcus agalactiae serotype V (strain ATCC BAA-611 / 2603 V/R).